The following is a 153-amino-acid chain: Endoribonuclease YbeY (153 aa).

Residues histidine 119, histidine 123, and histidine 129 each contribute to the Zn(2+) site.

The protein belongs to the endoribonuclease YbeY family. Zn(2+) is required as a cofactor.

The protein resides in the cytoplasm. Its function is as follows. Single strand-specific metallo-endoribonuclease involved in late-stage 70S ribosome quality control and in maturation of the 3' terminus of the 16S rRNA. The sequence is that of Endoribonuclease YbeY from Desulforamulus reducens (strain ATCC BAA-1160 / DSM 100696 / MI-1) (Desulfotomaculum reducens).